Here is a 164-residue protein sequence, read N- to C-terminus: UPF0225 protein Shewmr7_1921 (164 aa).

It belongs to the UPF0225 family.

In Shewanella sp. (strain MR-7), this protein is UPF0225 protein Shewmr7_1921.